Here is a 435-residue protein sequence, read N- to C-terminus: MSDPNANEAEKNIEIWKVKKLIKRLEAARGNGTSMISLIIPPKDQISRAAKMLAEEYGTASNIKSRVNRQSVLSAITSTQQRLKLYNKVPPNGLVVYCGEILTSEGKERKVNIDFEPFKPINTSLYLCDNKFHTEALAELLESDQKFGFIVMDGNGALFGTLSGNTRDIVHKFSVDLPKKHGRGGQSALRFARLREEKRHNYVRKVAELAVQNFITNDKVNVMGIVLAGSADFKNDLNASDMFDQRLATKVIKVVDVSYGGENGFNQAIELASETLGNVKFIQEKKLIGKYFEEISQDTGRICYGVEDTLKALELGAVETLIVFENLEVTRWVLKDSNGAEIIIHSTKQQDAANRDRFMDKETGQEMEVVSQESFLEWIAEHYKDFGTTLEFVSDRSTEGNQFVKGFGGIGGILRYKVNFEQLNEVDDDDEYYDD.

Belongs to the eukaryotic release factor 1 family. Heterodimer of two subunits, one of which binds GTP.

It is found in the cytoplasm. Functionally, directs the termination of nascent peptide synthesis (translation) in response to the termination codons UAA, UAG and UGA. This is Eukaryotic peptide chain release factor subunit 1 (SU2) from Podospora anserina (Pleurage anserina).